The primary structure comprises 198 residues: Dual specificity protein phosphatase 13B (198 aa).

The Tyrosine-protein phosphatase domain maps to 45–193 (HINEVWPNLF…LQVLDNRLRR (149 aa)). Cysteine 138 (phosphocysteine intermediate) is an active-site residue.

The protein belongs to the protein-tyrosine phosphatase family. Non-receptor class dual specificity subfamily. Most abundantly expressed in the testis.

The catalysed reaction is O-phospho-L-tyrosyl-[protein] + H2O = L-tyrosyl-[protein] + phosphate. The enzyme catalyses O-phospho-L-seryl-[protein] + H2O = L-seryl-[protein] + phosphate. It catalyses the reaction O-phospho-L-threonyl-[protein] + H2O = L-threonyl-[protein] + phosphate. Functionally, dual specificity phosphatase that dephosphorylates MAPK8/JNK and MAPK14/p38, but not MAPK1/ERK2, in vitro. Exhibits intrinsic phosphatase activity towards both phospho-seryl/threonyl and -tyrosyl residues, with similar specific activities in vitro. The sequence is that of Dual specificity protein phosphatase 13B from Mus musculus (Mouse).